The primary structure comprises 169 residues: Cytochrome c oxidase subunit 4 isoform 1, mitochondrial (169 aa).

The N-terminal 22 residues, 1-22 (MLATRALSLIGKRAISTSVCLR), are a transit peptide targeting the mitochondrion. Topologically, residues 23–98 (AHGSVVKSED…SFAEMNKGTN (76 aa)) are mitochondrial matrix. K29 is modified (N6-acetyllysine; alternate). K29 carries the post-translational modification N6-succinyllysine; alternate. Residue K53 is modified to N6-acetyllysine. Phosphoserine occurs at positions 56 and 58. K60 is modified (N6-acetyllysine; alternate). K60 carries the post-translational modification N6-succinyllysine; alternate. K67 carries the post-translational modification N6-acetyllysine. A helical membrane pass occupies residues 99-124 (EWKTVVGLAMFFIGFTALVLIWEKSY). At 125–169 (VYGPIPHTFDRDWVAMQTKRMLDMKVNPIQGFSAKWDYNKNEWKK) the chain is on the mitochondrial intermembrane side.

It belongs to the cytochrome c oxidase IV family. In terms of assembly, component of the cytochrome c oxidase (complex IV, CIV), a multisubunit enzyme composed of 14 subunits. The complex is composed of a catalytic core of 3 subunits MT-CO1, MT-CO2 and MT-CO3, encoded in the mitochondrial DNA, and 11 supernumerary subunits COX4I, COX5A, COX5B, COX6A, COX6B, COX6C, COX7A, COX7B, COX7C, COX8 and NDUFA4, which are encoded in the nuclear genome. The complex exists as a monomer or a dimer and forms supercomplexes (SCs) in the inner mitochondrial membrane with NADH-ubiquinone oxidoreductase (complex I, CI) and ubiquinol-cytochrome c oxidoreductase (cytochrome b-c1 complex, complex III, CIII), resulting in different assemblies (supercomplex SCI(1)III(2)IV(1) and megacomplex MCI(2)III(2)IV(2)). Interacts with PHB2; the interaction decreases in absence of SPHK2. Interacts with AFG1L. Interacts with ABCB7; this interaction allows the regulation of cellular iron homeostasis and cellular reactive oxygen species (ROS) levels in cardiomyocytes. Interacts with FLVCR2; this interaction occurs in the absence of heme and is disrupted upon heme binding. Interacts with IRGC.

It localises to the mitochondrion inner membrane. It participates in energy metabolism; oxidative phosphorylation. Functionally, component of the cytochrome c oxidase, the last enzyme in the mitochondrial electron transport chain which drives oxidative phosphorylation. The respiratory chain contains 3 multisubunit complexes succinate dehydrogenase (complex II, CII), ubiquinol-cytochrome c oxidoreductase (cytochrome b-c1 complex, complex III, CIII) and cytochrome c oxidase (complex IV, CIV), that cooperate to transfer electrons derived from NADH and succinate to molecular oxygen, creating an electrochemical gradient over the inner membrane that drives transmembrane transport and the ATP synthase. Cytochrome c oxidase is the component of the respiratory chain that catalyzes the reduction of oxygen to water. Electrons originating from reduced cytochrome c in the intermembrane space (IMS) are transferred via the dinuclear copper A center (CU(A)) of subunit 2 and heme A of subunit 1 to the active site in subunit 1, a binuclear center (BNC) formed by heme A3 and copper B (CU(B)). The BNC reduces molecular oxygen to 2 water molecules using 4 electrons from cytochrome c in the IMS and 4 protons from the mitochondrial matrix. This Rattus norvegicus (Rat) protein is Cytochrome c oxidase subunit 4 isoform 1, mitochondrial (Cox4i1).